We begin with the raw amino-acid sequence, 413 residues long: 1-acylglycerol-3-phosphate O-acyltransferase Pnpla3 (413 aa).

Over 1–42 (MYDPERRWSLSFAGCGFLGFYHVGATLCLSERAPHLLRDART) the chain is Cytoplasmic. A PNPLA domain is found at 10-179 (LSFAGCGFLG…SDNVPVLDAK (170 aa)). Positions 14 to 19 (GCGFLG) match the GXGXXG motif. The chain crosses the membrane as a helical; Signal-anchor for type II membrane protein span at residues 43–63 (FFGCSAGALHAVTFVCSLPLG). Positions 45 to 49 (GCSAG) match the GXSXG motif. Catalysis depends on Ser47, which acts as the Nucleophile. Residues 64-413 (RIMEILMDLV…HKPQGNSAGL (350 aa)) lie on the Lumenal side of the membrane. Residue Asp166 is the Proton acceptor of the active site. The DGA/G motif lies at 166-168 (DGG). Asn206 and Asn209 each carry an N-linked (GlcNAc...) asparagine glycan. The disordered stretch occupies residues 389–413 (KDDHRMLKHGHHPSPHKPQGNSAGL). Residues 394–403 (MLKHGHHPSP) show a composition bias toward basic residues.

As to expression, restricted to adipose tissue. Expressed in inguinal and epididymal white adipose tissues and in interscapular brown adipose tissue. Also expressed in liver in response to high-sucrose diet.

It is found in the membrane. The protein resides in the lipid droplet. The catalysed reaction is a 1-acyl-sn-glycero-3-phosphate + an acyl-CoA = a 1,2-diacyl-sn-glycero-3-phosphate + CoA. It catalyses the reaction a triacylglycerol + H2O = a diacylglycerol + a fatty acid + H(+). It carries out the reaction a 1-acylglycerol + a 1,3-diacylglycerol = a triacylglycerol + glycerol. The enzyme catalyses a 1-acylglycerol + a 1,2-diacylglycerol = a triacylglycerol + glycerol. The catalysed reaction is 2 a 1-acylglycerol = a 1,2-diacylglycerol + glycerol. It catalyses the reaction 1-(9Z-octadecenoyl)-sn-glycero-3-phosphate + (9Z)-octadecenoyl-CoA = 1,2-di-(9Z-octadecenoyl)-sn-glycero-3-phosphate + CoA. It carries out the reaction 1-(9Z-octadecenoyl)-sn-glycero-3-phosphate + hexadecanoyl-CoA = 1-(9Z)-octadecenoyl-2-hexadecanoyl-sn-glycero-3-phosphate + CoA. The enzyme catalyses 1-(9Z-octadecenoyl)-sn-glycero-3-phosphate + (9Z,12Z)-octadecadienoyl-CoA = 1-(9Z)-octadecenoyl-2-(9Z,12Z)-octadecadienoyl-sn-glycero-3-phosphate + CoA. The catalysed reaction is 1-(9Z-octadecenoyl)-sn-glycero-3-phosphate + (5Z,8Z,11Z,14Z)-eicosatetraenoyl-CoA = 1-(9Z)-octadecenoyl-2-(5Z,8Z,11Z,14Z)-eicosatetraenoyl-sn-glycero-3-phosphate + CoA. It catalyses the reaction 2 1-(9Z-octadecenoyl)-glycerol = 1,2-di-(9Z-octadecenoyl)-glycerol + glycerol. It carries out the reaction 1-(9Z-octadecenoyl)-glycerol + 1,2-di-(9Z-octadecenoyl)-glycerol = 1,2,3-tri-(9Z-octadecenoyl)-glycerol + glycerol. The enzyme catalyses 1-(9Z-octadecenoyl)-glycerol + 1,3-di-(9Z-octadecenoyl)-glycerol = 1,2,3-tri-(9Z-octadecenoyl)-glycerol + glycerol. The catalysed reaction is 1,2,3-tri-(9Z-octadecenoyl)-glycerol + H2O = 1,3-di-(9Z-octadecenoyl)-glycerol + (9Z)-octadecenoate + H(+). It catalyses the reaction a 1,2-diacyl-sn-glycero-3-phosphocholine + H2O = a 1-acyl-sn-glycero-3-phosphocholine + a fatty acid + H(+). It functions in the pathway phospholipid metabolism. Its pathway is glycerolipid metabolism. Functionally, specifically catalyzes coenzyme A (CoA)-dependent acylation of 1-acyl-sn-glycerol 3-phosphate (2-lysophosphatidic acid/LPA) to generate phosphatidic acid (PA), an important metabolic intermediate and precursor for both triglycerides and glycerophospholipids. Does not esterify other lysophospholipids. Acyl donors are long chain (at least C16) fatty acyl-CoAs: arachidonoyl-CoA, linoleoyl-CoA, oleoyl-CoA and at a lesser extent palmitoyl-CoA. Additionally possesses low triacylglycerol lipase and CoA-independent acylglycerol transacylase activities and thus may play a role in acyl-chain remodeling of triglycerides. In vitro may express hydrolytic activity against glycerolipids triacylglycerol, diacylglycerol and monoacylglycerol, with a strong preference for oleic acid as the acyl moiety. However, the triacylglycerol hydrolase activity is controversial and may be very low. Possesses phospholipase A2 activity. This Mus musculus (Mouse) protein is 1-acylglycerol-3-phosphate O-acyltransferase Pnpla3.